Reading from the N-terminus, the 236-residue chain is Pyridoxine 5'-phosphate synthase (236 aa).

A 3-amino-2-oxopropyl phosphate-binding site is contributed by Asn6. Asp8–His9 lines the 1-deoxy-D-xylulose 5-phosphate pocket. Residue Arg17 participates in 3-amino-2-oxopropyl phosphate binding. Catalysis depends on His42, which acts as the Proton acceptor. 1-deoxy-D-xylulose 5-phosphate contacts are provided by Arg44 and His49. Glu69 (proton acceptor) is an active-site residue. 1-deoxy-D-xylulose 5-phosphate is bound at residue Thr99. His190 functions as the Proton donor in the catalytic mechanism. 3-amino-2-oxopropyl phosphate contacts are provided by residues Gly191 and Gly212–His213.

This sequence belongs to the PNP synthase family. In terms of assembly, homooctamer; tetramer of dimers.

Its subcellular location is the cytoplasm. It carries out the reaction 3-amino-2-oxopropyl phosphate + 1-deoxy-D-xylulose 5-phosphate = pyridoxine 5'-phosphate + phosphate + 2 H2O + H(+). The protein operates within cofactor biosynthesis; pyridoxine 5'-phosphate biosynthesis; pyridoxine 5'-phosphate from D-erythrose 4-phosphate: step 5/5. Its function is as follows. Catalyzes the complicated ring closure reaction between the two acyclic compounds 1-deoxy-D-xylulose-5-phosphate (DXP) and 3-amino-2-oxopropyl phosphate (1-amino-acetone-3-phosphate or AAP) to form pyridoxine 5'-phosphate (PNP) and inorganic phosphate. This Chloroherpeton thalassium (strain ATCC 35110 / GB-78) protein is Pyridoxine 5'-phosphate synthase.